Consider the following 75-residue polypeptide: ORF2p protein (75 aa).

An important for viral replication in intestinal cells region spans residues 13–18 (WIGHPV). Residues 23–45 (IVYLFVGFTPLTLETLHTLNYII) are membrane-embedded. A disordered region spans residues 53 to 75 (APRSPHSDPARMRIPTQPRKAPL).

It is found in the host cytoplasmic vesicle membrane. Facilitates virus release from intestinal cells in vitro, possibly through the host autophagic pathway. This chain is ORF2p protein, found in Human enterovirus 71 (strain USA/BrCr/1970) (EV71).